A 358-amino-acid chain; its full sequence is DNA ligase C (358 aa).

Lysine 29 (N6-AMP-lysine intermediate) is an active-site residue.

It belongs to the ATP-dependent DNA ligase family. It depends on a divalent metal cation as a cofactor.

It catalyses the reaction ATP + (deoxyribonucleotide)n-3'-hydroxyl + 5'-phospho-(deoxyribonucleotide)m = (deoxyribonucleotide)n+m + AMP + diphosphate.. Its function is as follows. DNA ligase that seals nicks in double-stranded DNA during DNA replication, DNA recombination and DNA repair. This chain is DNA ligase C (ligC), found in Mycobacterium tuberculosis (strain ATCC 25618 / H37Rv).